A 614-amino-acid polypeptide reads, in one-letter code: Methionine--tRNA ligase (614 aa).

The short motif at 11–21 (PYTNGPRHIGH) is the 'HIGH' region element. Zn(2+) is bound by residues Cys143, Cys146, Cys156, and Cys159. The 'KMSKS' region signature appears at 359–363 (QFSTS). Thr362 contacts ATP.

The protein belongs to the class-I aminoacyl-tRNA synthetase family. MetG type 1 subfamily. As to quaternary structure, monomer. It depends on Zn(2+) as a cofactor.

The protein resides in the cytoplasm. It carries out the reaction tRNA(Met) + L-methionine + ATP = L-methionyl-tRNA(Met) + AMP + diphosphate. In terms of biological role, is required not only for elongation of protein synthesis but also for the initiation of all mRNA translation through initiator tRNA(fMet) aminoacylation. This is Methionine--tRNA ligase from Beutenbergia cavernae (strain ATCC BAA-8 / DSM 12333 / CCUG 43141 / JCM 11478 / NBRC 16432 / NCIMB 13614 / HKI 0122).